We begin with the raw amino-acid sequence, 434 residues long: 3-phosphoshikimate 1-carboxyvinyltransferase (434 aa).

Residues lysine 22, serine 23, and arginine 27 each coordinate 3-phosphoshikimate. A phosphoenolpyruvate-binding site is contributed by lysine 22. Phosphoenolpyruvate is bound by residues glycine 93 and arginine 121. 3-phosphoshikimate is bound by residues serine 168, serine 169, glutamine 170, serine 199, aspartate 320, and lysine 347. Glutamine 170 contacts phosphoenolpyruvate. Aspartate 320 (proton acceptor) is an active-site residue. Phosphoenolpyruvate-binding residues include arginine 351, arginine 395, and lysine 420.

The protein belongs to the EPSP synthase family. In terms of assembly, monomer.

Its subcellular location is the cytoplasm. The catalysed reaction is 3-phosphoshikimate + phosphoenolpyruvate = 5-O-(1-carboxyvinyl)-3-phosphoshikimate + phosphate. Its pathway is metabolic intermediate biosynthesis; chorismate biosynthesis; chorismate from D-erythrose 4-phosphate and phosphoenolpyruvate: step 6/7. Functionally, catalyzes the transfer of the enolpyruvyl moiety of phosphoenolpyruvate (PEP) to the 5-hydroxyl of shikimate-3-phosphate (S3P) to produce enolpyruvyl shikimate-3-phosphate and inorganic phosphate. This Cupriavidus taiwanensis (strain DSM 17343 / BCRC 17206 / CCUG 44338 / CIP 107171 / LMG 19424 / R1) (Ralstonia taiwanensis (strain LMG 19424)) protein is 3-phosphoshikimate 1-carboxyvinyltransferase.